The primary structure comprises 348 residues: Holliday junction branch migration complex subunit RuvB (348 aa).

Positions 3-183 (DDGLVSAAAS…FGFTAHLDFY (181 aa)) are large ATPase domain (RuvB-L). ATP-binding positions include leucine 22, arginine 23, glycine 64, lysine 67, threonine 68, serine 69, 130–132 (EDF), arginine 173, tyrosine 183, and arginine 220. A Mg(2+)-binding site is contributed by threonine 68. A small ATPAse domain (RuvB-S) region spans residues 184–254 (DADELARVLT…IAQAALRIYD (71 aa)). The segment at 257–348 (GLGLDRLDRA…TQVSLFTEGE (92 aa)) is head domain (RuvB-H). DNA is bound by residues arginine 312 and arginine 317.

The protein belongs to the RuvB family. Homohexamer. Forms an RuvA(8)-RuvB(12)-Holliday junction (HJ) complex. HJ DNA is sandwiched between 2 RuvA tetramers; dsDNA enters through RuvA and exits via RuvB. An RuvB hexamer assembles on each DNA strand where it exits the tetramer. Each RuvB hexamer is contacted by two RuvA subunits (via domain III) on 2 adjacent RuvB subunits; this complex drives branch migration. In the full resolvosome a probable DNA-RuvA(4)-RuvB(12)-RuvC(2) complex forms which resolves the HJ.

The protein localises to the cytoplasm. It carries out the reaction ATP + H2O = ADP + phosphate + H(+). The RuvA-RuvB-RuvC complex processes Holliday junction (HJ) DNA during genetic recombination and DNA repair, while the RuvA-RuvB complex plays an important role in the rescue of blocked DNA replication forks via replication fork reversal (RFR). RuvA specifically binds to HJ cruciform DNA, conferring on it an open structure. The RuvB hexamer acts as an ATP-dependent pump, pulling dsDNA into and through the RuvAB complex. RuvB forms 2 homohexamers on either side of HJ DNA bound by 1 or 2 RuvA tetramers; 4 subunits per hexamer contact DNA at a time. Coordinated motions by a converter formed by DNA-disengaged RuvB subunits stimulates ATP hydrolysis and nucleotide exchange. Immobilization of the converter enables RuvB to convert the ATP-contained energy into a lever motion, pulling 2 nucleotides of DNA out of the RuvA tetramer per ATP hydrolyzed, thus driving DNA branch migration. The RuvB motors rotate together with the DNA substrate, which together with the progressing nucleotide cycle form the mechanistic basis for DNA recombination by continuous HJ branch migration. Branch migration allows RuvC to scan DNA until it finds its consensus sequence, where it cleaves and resolves cruciform DNA. This chain is Holliday junction branch migration complex subunit RuvB, found in Frankia casuarinae (strain DSM 45818 / CECT 9043 / HFP020203 / CcI3).